The chain runs to 422 residues: Elongation factor 1-alpha (422 aa).

Residues Lys5–Ser221 enclose the tr-type G domain. The segment at Gly14–Ser21 is G1. Gly14–Ser21 lines the GTP pocket. Position 21 (Ser21) interacts with Mg(2+). Residues Gly70–Asp74 form a G2 region. Residues Asp91–Gly94 are G3. GTP-binding positions include Asp91–His95 and Asn146–Asp149. A G4 region spans residues Asn146 to Asp149. Positions Ser185 to Phe187 are G5.

Belongs to the TRAFAC class translation factor GTPase superfamily. Classic translation factor GTPase family. EF-Tu/EF-1A subfamily.

It is found in the cytoplasm. It catalyses the reaction GTP + H2O = GDP + phosphate + H(+). Functionally, GTP hydrolase that promotes the GTP-dependent binding of aminoacyl-tRNA to the A-site of ribosomes during protein biosynthesis. The protein is Elongation factor 1-alpha of Methanosarcina barkeri (strain Fusaro / DSM 804).